The following is a 578-amino-acid chain: Tetratricopeptide repeat protein ttc-39B (578 aa).

TPR repeat units lie at residues Ala-297–Tyr-330, Cys-481–Ile-514, and Pro-522–Tyr-554.

The chain is Tetratricopeptide repeat protein ttc-39B from Caenorhabditis elegans.